The chain runs to 327 residues: Aldo-keto reductase family 7 member A3 (327 aa).

The residue at position 2 (serine 2) is a Phosphoserine. The NADP(+) site is built by methionine 13, arginine 18, and aspartate 40. Residue tyrosine 45 is the Proton donor of the active site. Position 109 (histidine 109) interacts with citrate. NADP(+) is bound by residues asparagine 140, asparagine 194, leucine 196, glycine 198, arginine 204, and arginine 218. Citrate is bound by residues tyrosine 228 and arginine 231. NADP(+) contacts are provided by serine 286, glutamine 290, glutamine 293, asparagine 294, and arginine 327.

Belongs to the aldo/keto reductase family. Aldo/keto reductase 2 subfamily. Homodimer. Heterodimer with AKR7A2.

It is found in the cytoplasm. It catalyses the reaction a primary alcohol + NADP(+) = an aldehyde + NADPH + H(+). It carries out the reaction aflatoxin B1 dialdehyde + NADPH + H(+) = aflatoxin B1 C(6a)-monoaldehyde + NADP(+). The catalysed reaction is aflatoxin B1 dialdehyde + NADPH + H(+) = aflatoxin B1 C(8)-monoaldehyde + NADP(+). The enzyme catalyses aflatoxin B1 C(6a)-monoaldehyde + NADPH + 2 H(+) = aflatoxin B1 triol + NADP(+). Inhibited by citrate. Its function is as follows. Catalyzes the NADPH-dependent reduction of various carbonyl-containing compounds, including aldehydes, ketones, and toxic products from cellular metabolism or environmental exposure. Can reduce the dialdehyde form of aflatoxin B1 (AFB1) into alcohol derivatives, via monoaldehydes intermediates, thus preventing the formation of protein adducts that contribute to AFB1-induced toxicity. The sequence is that of Aldo-keto reductase family 7 member A3 from Rattus norvegicus (Rat).